Consider the following 64-residue polypeptide: DNA-directed RNA polymerase subunit Rpo10 (64 aa).

Zn(2+) contacts are provided by cysteine 7, cysteine 10, cysteine 45, and cysteine 46.

It belongs to the archaeal Rpo10/eukaryotic RPB10 RNA polymerase subunit family. As to quaternary structure, part of the RNA polymerase complex. The cofactor is Zn(2+).

It is found in the cytoplasm. The catalysed reaction is RNA(n) + a ribonucleoside 5'-triphosphate = RNA(n+1) + diphosphate. Functionally, DNA-dependent RNA polymerase (RNAP) catalyzes the transcription of DNA into RNA using the four ribonucleoside triphosphates as substrates. The protein is DNA-directed RNA polymerase subunit Rpo10 of Haloquadratum walsbyi (strain DSM 16790 / HBSQ001).